The primary structure comprises 426 residues: Glutamyl-tRNA reductase (426 aa).

Substrate contacts are provided by residues 49 to 52 (TCNR), serine 110, 115 to 117 (EAQ), and glutamine 121. The active-site Nucleophile is the cysteine 50. Residue 191 to 196 (GAGEMA) coordinates NADP(+).

The protein belongs to the glutamyl-tRNA reductase family. Homodimer.

It carries out the reaction (S)-4-amino-5-oxopentanoate + tRNA(Glu) + NADP(+) = L-glutamyl-tRNA(Glu) + NADPH + H(+). It functions in the pathway porphyrin-containing compound metabolism; protoporphyrin-IX biosynthesis; 5-aminolevulinate from L-glutamyl-tRNA(Glu): step 1/2. In terms of biological role, catalyzes the NADPH-dependent reduction of glutamyl-tRNA(Glu) to glutamate 1-semialdehyde (GSA). The sequence is that of Glutamyl-tRNA reductase from Rhodopirellula baltica (strain DSM 10527 / NCIMB 13988 / SH1).